A 298-amino-acid chain; its full sequence is Protoheme IX farnesyltransferase (298 aa).

Helical transmembrane passes span 24 to 44 (VVSL…PAWP), 46 to 66 (WTTI…AAAF), 97 to 117 (LVFA…VVNP), 118 to 138 (LTMW…TVLL), 146 to 166 (IVIG…AATG), 172 to 192 (ALLL…ALAL), 231 to 251 (LLPV…VLLG), and 278 to 298 (IWYL…PIPV).

Belongs to the UbiA prenyltransferase family. Protoheme IX farnesyltransferase subfamily.

The protein resides in the cell inner membrane. It catalyses the reaction heme b + (2E,6E)-farnesyl diphosphate + H2O = Fe(II)-heme o + diphosphate. The protein operates within porphyrin-containing compound metabolism; heme O biosynthesis; heme O from protoheme: step 1/1. Converts heme B (protoheme IX) to heme O by substitution of the vinyl group on carbon 2 of heme B porphyrin ring with a hydroxyethyl farnesyl side group. The sequence is that of Protoheme IX farnesyltransferase from Thiobacillus denitrificans (strain ATCC 25259 / T1).